We begin with the raw amino-acid sequence, 405 residues long: CLIP domain-containing serine protease B8 (405 aa).

The signal sequence occupies residues 1-24 (MSSAVLLLLVCGCALAVLSPVAYG). 3 cysteine pairs are disulfide-bonded: Cys-41–Cys-94, Cys-52–Cys-84, and Cys-58–Cys-95. A Clip domain is found at 41–95 (CDIPNEPNPGQCMLPAECVAYGKINDVSSLSSIERFSFIKQIQCNGSDTVPYVCC). Asn-85 and Asn-108 each carry an N-linked (GlcNAc...) asparagine glycan. A Peptidase S1 domain is found at 137 to 404 (IRGGQLAEID…YLPWIKMYTG (268 aa)). An intrachain disulfide couples Cys-167 to Cys-183. Catalysis depends on charge relay system residues His-182 and Asp-249. Intrachain disulfides connect Cys-322-Cys-339 and Cys-349-Cys-380. Ser-353 (charge relay system) is an active-site residue.

The protein belongs to the peptidase S1 family. CLIP subfamily. Post-translationally, proteolytic cleavage is necessary for activation. Cleaved and activated by CLIPB4.

The protein localises to the secreted. Functionally, serine protease that functions in the melanization-mediated immune response. Preferentially, cleaves substrates with an arginine at the P1 site. May be involved in the activation of the prophenoloxidase cascade upstream of CLIPB9; does not cleave prophenoloxidase. This chain is CLIP domain-containing serine protease B8, found in Anopheles gambiae (African malaria mosquito).